Reading from the N-terminus, the 510-residue chain is MRALLSVSDKEGIVEFGKELENLGFEILSTGGTFKLLKENGIKVIEVSDFTKSPELFEGRVKTLHPKIHGGILHKRSDENHIKQAKENEILGIDLVCVNLYPFKKTTIMSDDFDEIIENIDIGGPAMIRSAAKNYKDVMVLCDPLDYEKVIETLKKGQNDENFRLNLMIKAYEHTANYDAYIANYMNERFNGGFGASKFIVGQKVFDTKYGENPHQKGALYEFDAFFSANFKALKGEASFNNLTDINAALNLASSFDKAPAIAIVKHGNPCGFAIKENLVQSYIHALKCDSVSAYGGVVAINGTLDEALANKINEIYVEVIIAANVDEKALAVFEGKKRIKIFTQESPFLIRSFDKYDFKHIDGGFVYQNSDEVGEDELKNAKLMSQREASKEELKDLEIAMKIAAFTKSNNVVYVKNGAMVAIGMGMTSRIDAAKAAIAKAKEMGLDLQGCVLASEAFFPFRDSIDEASKVGVKAIVEPGGSIRDDEVVKAADEYGMALYFTGVRHFLH.

The MGS-like domain maps to 1 to 142 (MRALLSVSDK…KNYKDVMVLC (142 aa)).

It belongs to the PurH family.

The enzyme catalyses (6R)-10-formyltetrahydrofolate + 5-amino-1-(5-phospho-beta-D-ribosyl)imidazole-4-carboxamide = 5-formamido-1-(5-phospho-D-ribosyl)imidazole-4-carboxamide + (6S)-5,6,7,8-tetrahydrofolate. The catalysed reaction is IMP + H2O = 5-formamido-1-(5-phospho-D-ribosyl)imidazole-4-carboxamide. Its pathway is purine metabolism; IMP biosynthesis via de novo pathway; 5-formamido-1-(5-phospho-D-ribosyl)imidazole-4-carboxamide from 5-amino-1-(5-phospho-D-ribosyl)imidazole-4-carboxamide (10-formyl THF route): step 1/1. It participates in purine metabolism; IMP biosynthesis via de novo pathway; IMP from 5-formamido-1-(5-phospho-D-ribosyl)imidazole-4-carboxamide: step 1/1. The chain is Bifunctional purine biosynthesis protein PurH from Campylobacter jejuni subsp. jejuni serotype O:2 (strain ATCC 700819 / NCTC 11168).